A 479-amino-acid polypeptide reads, in one-letter code: Catalase easC (479 aa).

Residues 1 to 13 (MASQVSLTAQGSG) show a composition bias toward polar residues. A disordered region spans residues 1–28 (MASQVSLTAQGSGLSAPLNGPEHLTSTT). His-53 is an active-site residue. Heme is bound at residue Tyr-343. Residues 365–385 (HAANDAPKTKKPAVPLQKQSR) form a disordered region.

It belongs to the catalase family. Requires heme as cofactor.

Its pathway is alkaloid biosynthesis; ergot alkaloid biosynthesis. Its function is as follows. Catalase; part of the gene cluster that mediates the biosynthesis of fungal ergot alkaloid. DmaW catalyzes the first step of ergot alkaloid biosynthesis by condensing dimethylallyl diphosphate (DMAP) and tryptophan to form 4-dimethylallyl-L-tryptophan. The second step is catalyzed by the methyltransferase easF that methylates 4-dimethylallyl-L-tryptophan in the presence of S-adenosyl-L-methionine, resulting in the formation of 4-dimethylallyl-L-abrine. The catalase easC and the FAD-dependent oxidoreductase easE then transform 4-dimethylallyl-L-abrine to chanoclavine-I which is further oxidized by easD in the presence of NAD(+), resulting in the formation of chanoclavine-I aldehyde. Agroclavine dehydrogenase easG then mediates the conversion of chanoclavine-I aldehyde to agroclavine via a non-enzymatic adduct reaction: the substrate is an iminium intermediate that is formed spontaneously from chanoclavine-I aldehyde in the presence of glutathione. Further conversion of agroclavine to paspalic acid is a two-step process involving oxidation of agroclavine to elymoclavine and of elymoclavine to paspalic acid, the second step being performed by the elymoclavine oxidase cloA. However, cloA does not encode a functional enzyme indicating that C.fusiformis terminates its ergot alkaloid pathway at elymoclavine. This chain is Catalase easC, found in Claviceps fusiformis (Ergot fungus).